We begin with the raw amino-acid sequence, 80 residues long: Transcription elongation factor 1 homolog (80 aa).

4 residues coordinate Zn(2+): C25, C28, C49, and C52.

The protein belongs to the ELOF1 family.

It localises to the nucleus. Transcription elongation factor implicated in the maintenance of proper chromatin structure in actively transcribed regions. This Encephalitozoon cuniculi (strain GB-M1) (Microsporidian parasite) protein is Transcription elongation factor 1 homolog.